The chain runs to 310 residues: Aspartate carbamoyltransferase catalytic subunit (310 aa).

Carbamoyl phosphate is bound by residues Arg-59 and Thr-60. Lys-87 is a binding site for L-aspartate. 3 residues coordinate carbamoyl phosphate: Arg-109, His-137, and Gln-140. Arg-170 and Arg-225 together coordinate L-aspartate. Residues Gly-266 and Pro-267 each coordinate carbamoyl phosphate.

This sequence belongs to the aspartate/ornithine carbamoyltransferase superfamily. ATCase family. As to quaternary structure, heterododecamer (2C3:3R2) of six catalytic PyrB chains organized as two trimers (C3), and six regulatory PyrI chains organized as three dimers (R2).

The enzyme catalyses carbamoyl phosphate + L-aspartate = N-carbamoyl-L-aspartate + phosphate + H(+). The protein operates within pyrimidine metabolism; UMP biosynthesis via de novo pathway; (S)-dihydroorotate from bicarbonate: step 2/3. Functionally, catalyzes the condensation of carbamoyl phosphate and aspartate to form carbamoyl aspartate and inorganic phosphate, the committed step in the de novo pyrimidine nucleotide biosynthesis pathway. The sequence is that of Aspartate carbamoyltransferase catalytic subunit from Pelobacter propionicus (strain DSM 2379 / NBRC 103807 / OttBd1).